A 968-amino-acid polypeptide reads, in one-letter code: RNA polymerase-associated protein RapA (968 aa).

The region spanning 163–332 (EVGRRYAPRV…FARLRLLDPD (170 aa)) is the Helicase ATP-binding domain. 176 to 183 (DEVGLGKT) is an ATP binding site. A DEAH box motif is present at residues 278–281 (DEAH). In terms of domain architecture, Helicase C-terminal spans 491-643 (RVDWLIAFLK…ELTCPSGHVL (153 aa)).

This sequence belongs to the SNF2/RAD54 helicase family. RapA subfamily. As to quaternary structure, interacts with the RNAP. Has a higher affinity for the core RNAP than for the holoenzyme. Its ATPase activity is stimulated by binding to RNAP.

Its function is as follows. Transcription regulator that activates transcription by stimulating RNA polymerase (RNAP) recycling in case of stress conditions such as supercoiled DNA or high salt concentrations. Probably acts by releasing the RNAP, when it is trapped or immobilized on tightly supercoiled DNA. Does not activate transcription on linear DNA. Probably not involved in DNA repair. This is RNA polymerase-associated protein RapA from Shewanella putrefaciens (strain CN-32 / ATCC BAA-453).